Consider the following 346-residue polypeptide: Ribosomal RNA small subunit methyltransferase H (346 aa).

Residues 46–48 (GGY), D63, F90, D113, and Q120 each bind S-adenosyl-L-methionine. The segment at 270 to 346 (GGSAGSRHMP…LPETNELARS (77 aa)) is disordered.

It belongs to the methyltransferase superfamily. RsmH family.

The protein resides in the cytoplasm. The enzyme catalyses cytidine(1402) in 16S rRNA + S-adenosyl-L-methionine = N(4)-methylcytidine(1402) in 16S rRNA + S-adenosyl-L-homocysteine + H(+). Functionally, specifically methylates the N4 position of cytidine in position 1402 (C1402) of 16S rRNA. This Brucella suis (strain ATCC 23445 / NCTC 10510) protein is Ribosomal RNA small subunit methyltransferase H.